The following is a 140-amino-acid chain: Thioredoxin M-type, chloroplastic (140 aa).

Residues 1-34 (MALVARRAAVPSARSSARPAFARAAPRRSVVVRA) constitute a chloroplast transit peptide. Residues 35 to 140 (EAGAVNDDTF…IVQTVEKYLN (106 aa)) enclose the Thioredoxin domain. Catalysis depends on nucleophile residues Cys-64 and Cys-67. Cys-64 and Cys-67 are joined by a disulfide.

The protein belongs to the thioredoxin family. Plant M-type subfamily. As to quaternary structure, forms a complex with heterodimeric ferredoxin-thioredoxin reductase (FTR) and ferredoxin.

The protein localises to the plastid. It is found in the chloroplast. In terms of biological role, participates in various redox reactions through the reversible oxidation of the active center dithiol to a disulfide. The M form is known to activate NADP-malate dehydrogenase. The chain is Thioredoxin M-type, chloroplastic (TRXM) from Chlamydomonas reinhardtii (Chlamydomonas smithii).